The sequence spans 346 residues: NADH-cytochrome b5 reductase 2 (346 aa).

Residues 28 to 50 (GGSNAALYAGLAAAAGAGAYYFL) traverse the membrane as a helical segment. The region spanning 95-200 (QGFISLKLDS…KGPIPKYPWS (106 aa)) is the FAD-binding FR-type domain. FAD is bound at residue 203–238 (KHDHIALIAGGTGITPMYQLARAIFNNPADKTKVTL).

Belongs to the flavoprotein pyridine nucleotide cytochrome reductase family. FAD is required as a cofactor.

It localises to the mitochondrion outer membrane. The catalysed reaction is 2 Fe(III)-[cytochrome b5] + NADH = 2 Fe(II)-[cytochrome b5] + NAD(+) + H(+). In terms of biological role, may mediate the reduction of outer membrane cytochrome b5. In Botryotinia fuckeliana (strain B05.10) (Noble rot fungus), this protein is NADH-cytochrome b5 reductase 2 (mcr1).